The primary structure comprises 456 residues: Phospholipase A1 member A (456 aa).

The N-terminal stretch at 1–25 (MPPGPWESCFWVGGLILWLSVGSSG) is a signal peptide. Asparagine 79 carries an N-linked (GlcNAc...) asparagine glycan. The Nucleophile role is filled by serine 166. Aspartate 190 acts as the Charge relay system in catalysis. Cysteine 245 and cysteine 258 are oxidised to a cystine. Residue histidine 260 is the Charge relay system of the active site. Disulfide bonds link cysteine 282–cysteine 293 and cysteine 296–cysteine 304. Asparagine 365 carries an N-linked (GlcNAc...) asparagine glycan. Residues 374–456 (IPKQQRYGKG…VSCDLKIACV (83 aa)) are involved in the recognition of diacyl-phospholipids.

It belongs to the AB hydrolase superfamily. Lipase family. Widely expressed. Expressed in placenta, prostate and liver. Weakly or not expressed in skin, leukocytes, platelets, colon, spleen, lung, muscle and kidney.

The protein localises to the secreted. It carries out the reaction a 1,2-diacyl-sn-glycero-3-phospho-L-serine + H2O = a 2-acyl-sn-glycero-3-phospho-L-serine + a fatty acid + H(+). The catalysed reaction is 1,2-di-(9Z)-octadecenoyl-sn-glycero-3-phospho-L-serine + H2O = 2-(9Z-octadecenoyl)-sn-glycero-3-phospho-L-serine + (9Z)-octadecenoate + H(+). It catalyses the reaction 1-hexadecanoyl-2-(5Z,8Z,11Z,14Z-eicosatetraenoyl)-sn-glycero-3-phospho-L-serine + H2O = 2-(5Z,8Z,11Z,14Z)-eicosatetraenoyl-sn-glycero-3-phospho-L-serine + hexadecanoate + H(+). The enzyme catalyses a 1-acyl-sn-glycero-3-phospho-L-serine + H2O = sn-glycero-3-phospho-L-serine + a fatty acid + H(+). It carries out the reaction 1-(9Z-octadecenoyl)-sn-glycero-3-phospho-L-serine + H2O = sn-glycero-3-phospho-L-serine + (9Z)-octadecenoate + H(+). Hydrolyzes the ester bond of the acyl group attached at the sn-1 position of phosphatidylserines (phospholipase A1 activity) and 1-acyl-2-lysophosphatidylserines (lysophospholipase activity) in the pathway of phosphatidylserines acyl chain remodeling. Cleaves phosphatidylserines exposed on the outer leaflet of the plasma membrane of apoptotic cells producing 2-acyl-1-lysophosphatidylserines, which in turn enhance mast cell activation and histamine production. Has no activity toward other glycerophospholipids including phosphatidylcholines, phosphatidylethanolamines, phosphatidic acids or phosphatidylinositols, or glycerolipids such as triolein. Functionally, hydrolyzes lyso-PS but not PS. The chain is Phospholipase A1 member A from Homo sapiens (Human).